Here is a 629-residue protein sequence, read N- to C-terminus: Filament-like plant protein 2 (629 aa).

Coiled coils occupy residues 34–61 and 102–171; these read WEKA…LEDR and NTGL…LEAE. Residues 186–205 are disordered; sequence SSNQSVDSHSDGGRERVEGS. Over residues 193-203 the composition is skewed to basic and acidic residues; it reads SHSDGGRERVE. Positions 270–493 form a coiled coil; it reads ELSLMEKLEK…IEEKTMIKRE (224 aa).

The protein belongs to the FPP family. Interacts with WPP/MAF proteins. Binds to COG2; this interaction promotes the association between cortical microtubules and EXO70A1. As to expression, accumulates in preferentially xylem cells.

It localises to the vesicle. In terms of biological role, ensures, when in complex with FPP3/VETH1 and COG2, the correct secondary cell wall (SCW) deposition pattern by recruiting exocyst components to cortical microtubules in xylem cells during secondary cell wall deposition by recruiting EXO70A1. The sequence is that of Filament-like plant protein 2 from Arabidopsis thaliana (Mouse-ear cress).